Here is a 247-residue protein sequence, read N- to C-terminus: V-type proton ATPase subunit D (247 aa).

Belongs to the V-ATPase D subunit family. V-ATPase is a heteromultimeric enzyme made up of two complexes: the ATP-hydrolytic V1 complex and the proton translocation V0 complex. The V1 complex consists of three catalytic AB heterodimers that form a heterohexamer, three peripheral stalks each consisting of EG heterodimers, one central rotor including subunits D and F, and the regulatory subunits C and H. The proton translocation complex V0 consists of the proton transport subunit a, a ring of proteolipid subunits c9c'', rotary subunit d, subunits e and f, and the accessory subunits ATP6AP1/Ac45 and ATP6AP2/PRR. Interacts with SNX10. As to expression, expressed in brain (at protein level). Present in tissues active in secretion. Amounts elevated in brain, kidney and testis.

The protein localises to the membrane. It localises to the cytoplasmic vesicle. Its subcellular location is the clathrin-coated vesicle membrane. The protein resides in the cytoplasm. It is found in the cytoskeleton. The protein localises to the microtubule organizing center. It localises to the centrosome. Its subcellular location is the cell projection. The protein resides in the cilium. Subunit of the V1 complex of vacuolar(H+)-ATPase (V-ATPase), a multisubunit enzyme composed of a peripheral complex (V1) that hydrolyzes ATP and a membrane integral complex (V0) that translocates protons. V-ATPase is responsible for acidifying and maintaining the pH of intracellular compartments and in some cell types, is targeted to the plasma membrane, where it is responsible for acidifying the extracellular environment. May play a role in cilium biogenesis through regulation of the transport and the localization of proteins to the cilium. The polypeptide is V-type proton ATPase subunit D (ATP6V1D) (Bos taurus (Bovine)).